Consider the following 111-residue polypeptide: Probable U2 small nuclear ribonucleoprotein B'' (111 aa).

Residues Asn4–Ser83 form the RRM domain.

Belongs to the 40S cdc5-associated complex (or cwf complex), a spliceosome sub-complex reminiscent of a late-stage spliceosome composed of the U2, U5 and U6 snRNAs and at least brr2, cdc5, cwf2/prp3, cwf3/syf1, cwf4/syf3, cwf5/ecm2, spp42/cwf6, cwf7/spf27, cwf8, cwf9, cwf10, cwf11, cwf12, prp45/cwf13, cwf14, cwf15, cwf16, cwf17, cwf18, cwf19, cwf20, cwf21, cwf22, cwf23, cwf24, cwf25, cwf26, cyp7/cwf27, cwf28, cwf29/ist3, lea1, msl1, prp5/cwf1, prp10, prp12/sap130, prp17, prp22, sap61, sap62, sap114, sap145, slu7, smb1, smd1, smd3, smf1, smg1 and syf2.

It is found in the nucleus. Its function is as follows. Involved in pre-mRNA splicing. This protein is associated with snRNP U2. It binds stem loop IV of U2 snRNA. This chain is Probable U2 small nuclear ribonucleoprotein B'' (msl1), found in Schizosaccharomyces pombe (strain 972 / ATCC 24843) (Fission yeast).